A 185-amino-acid chain; its full sequence is Elongation factor P (185 aa).

Belongs to the elongation factor P family.

Its subcellular location is the cytoplasm. Its pathway is protein biosynthesis; polypeptide chain elongation. In terms of biological role, involved in peptide bond synthesis. Stimulates efficient translation and peptide-bond synthesis on native or reconstituted 70S ribosomes in vitro. Probably functions indirectly by altering the affinity of the ribosome for aminoacyl-tRNA, thus increasing their reactivity as acceptors for peptidyl transferase. The protein is Elongation factor P of Thermosynechococcus vestitus (strain NIES-2133 / IAM M-273 / BP-1).